The sequence spans 388 residues: Chorismate synthase (388 aa).

NADP(+) contacts are provided by R39 and R45. Positions 95–118 (EKNEKSRRVSRPRPGHADLVGGMK) are disordered. FMN is bound by residues 130–132 (RSS), 251–252 (NA), G296, 311–315 (KPIPT), and R337.

Belongs to the chorismate synthase family. In terms of assembly, homotetramer. FMNH2 is required as a cofactor.

The enzyme catalyses 5-O-(1-carboxyvinyl)-3-phosphoshikimate = chorismate + phosphate. It participates in metabolic intermediate biosynthesis; chorismate biosynthesis; chorismate from D-erythrose 4-phosphate and phosphoenolpyruvate: step 7/7. Its function is as follows. Catalyzes the anti-1,4-elimination of the C-3 phosphate and the C-6 proR hydrogen from 5-enolpyruvylshikimate-3-phosphate (EPSP) to yield chorismate, which is the branch point compound that serves as the starting substrate for the three terminal pathways of aromatic amino acid biosynthesis. This reaction introduces a second double bond into the aromatic ring system. This chain is Chorismate synthase, found in Listeria welshimeri serovar 6b (strain ATCC 35897 / DSM 20650 / CCUG 15529 / CIP 8149 / NCTC 11857 / SLCC 5334 / V8).